A 478-amino-acid polypeptide reads, in one-letter code: Glutamate--tRNA ligase (478 aa).

The short motif at 9-19 (PSPTGLLHIGT) is the 'HIGH' region element. A 'KMSKS' region motif is present at residues 248–252 (KLSKR). Lysine 251 provides a ligand contact to ATP.

Belongs to the class-I aminoacyl-tRNA synthetase family. Glutamate--tRNA ligase type 1 subfamily. As to quaternary structure, monomer.

The protein localises to the cytoplasm. The enzyme catalyses tRNA(Glu) + L-glutamate + ATP = L-glutamyl-tRNA(Glu) + AMP + diphosphate. Functionally, catalyzes the attachment of glutamate to tRNA(Glu) in a two-step reaction: glutamate is first activated by ATP to form Glu-AMP and then transferred to the acceptor end of tRNA(Glu). The chain is Glutamate--tRNA ligase from Prochlorococcus marinus (strain MIT 9515).